The following is a 235-amino-acid chain: Phosphoribosylformylglycinamidine synthase subunit PurQ (235 aa).

A Glutamine amidotransferase type-1 domain is found at 3–234 (FGVLVFPGSN…LNSLMAQGVT (232 aa)). Cys-86 acts as the Nucleophile in catalysis. Residues His-203 and Glu-205 contribute to the active site.

Part of the FGAM synthase complex composed of 1 PurL, 1 PurQ and 2 PurS subunits.

It is found in the cytoplasm. The enzyme catalyses N(2)-formyl-N(1)-(5-phospho-beta-D-ribosyl)glycinamide + L-glutamine + ATP + H2O = 2-formamido-N(1)-(5-O-phospho-beta-D-ribosyl)acetamidine + L-glutamate + ADP + phosphate + H(+). The catalysed reaction is L-glutamine + H2O = L-glutamate + NH4(+). It participates in purine metabolism; IMP biosynthesis via de novo pathway; 5-amino-1-(5-phospho-D-ribosyl)imidazole from N(2)-formyl-N(1)-(5-phospho-D-ribosyl)glycinamide: step 1/2. Functionally, part of the phosphoribosylformylglycinamidine synthase complex involved in the purines biosynthetic pathway. Catalyzes the ATP-dependent conversion of formylglycinamide ribonucleotide (FGAR) and glutamine to yield formylglycinamidine ribonucleotide (FGAM) and glutamate. The FGAM synthase complex is composed of three subunits. PurQ produces an ammonia molecule by converting glutamine to glutamate. PurL transfers the ammonia molecule to FGAR to form FGAM in an ATP-dependent manner. PurS interacts with PurQ and PurL and is thought to assist in the transfer of the ammonia molecule from PurQ to PurL. This chain is Phosphoribosylformylglycinamidine synthase subunit PurQ, found in Acaryochloris marina (strain MBIC 11017).